The following is a 225-amino-acid chain: Histone H3-like centromeric protein cid (225 aa).

Residues 1–11 (MPRHSRAKRAP) show a composition bias toward basic residues. Residues 1-131 (MPRHSRAKRA…KAANPMSRAK (131 aa)) form a disordered region. Residues 43 to 52 (FTTSQLTLQD) show a composition bias toward polar residues. Ser-74 and Ser-75 each carry phosphoserine. The residue at position 76 (Thr-76) is a Phosphothreonine. At Ser-77 the chain carries Phosphoserine. Positions 86–103 (RYPTTRSPQTRRMTVQQE) are enriched in polar residues. The H3-like stretch occupies residues 133–225 (MDREIRRLQH…AYICDRGRQF (93 aa)).

This sequence belongs to the histone H3 family. As to quaternary structure, forms a nucleosome-like histone octamer containing two molecules each of H2A, H2B, cid and H4 assembled in one cid-H4 heterotetramer and two H2A-H2B heterodimers. The cid-H4 heterotetramer is more compact and structurally more rigid than corresponding H3-H4 heterotetramers. Interacts with the condensin subunit Cap-G. Interacts with Chrac-14.

It is found in the nucleus. The protein localises to the chromosome. It localises to the centromere. Its subcellular location is the kinetochore. Histone H3-like variant which exclusively replaces conventional H3 in the nucleosome core of centromeric chromatin at the inner plate of the kinetochore. Required for recruitment and assembly of kinetochore proteins, mitotic progression and chromosome segregation. May serve as an epigenetic mark that propagates centromere identity through replication and cell division. The chain is Histone H3-like centromeric protein cid from Drosophila melanogaster (Fruit fly).